A 422-amino-acid polypeptide reads, in one-letter code: UDP-N-acetylglucosamine 1-carboxyvinyltransferase (422 aa).

A phosphoenolpyruvate-binding site is contributed by 22–23 (KN). Residue arginine 92 participates in UDP-N-acetyl-alpha-D-glucosamine binding. The active-site Proton donor is cysteine 116. Cysteine 116 is subject to 2-(S-cysteinyl)pyruvic acid O-phosphothioketal. Residues 121-125 (RPVDQ), aspartate 305, and isoleucine 327 each bind UDP-N-acetyl-alpha-D-glucosamine.

Belongs to the EPSP synthase family. MurA subfamily.

It is found in the cytoplasm. It carries out the reaction phosphoenolpyruvate + UDP-N-acetyl-alpha-D-glucosamine = UDP-N-acetyl-3-O-(1-carboxyvinyl)-alpha-D-glucosamine + phosphate. Its pathway is cell wall biogenesis; peptidoglycan biosynthesis. Cell wall formation. Adds enolpyruvyl to UDP-N-acetylglucosamine. This is UDP-N-acetylglucosamine 1-carboxyvinyltransferase from Sorangium cellulosum (strain So ce56) (Polyangium cellulosum (strain So ce56)).